A 333-amino-acid chain; its full sequence is tRNA-dihydrouridine(16) synthase (333 aa).

Residues 19–21 (PMQ) and Gln80 each bind FMN. Cys110 (proton donor) is an active-site residue. FMN contacts are provided by residues Lys151, 211–213 (NGD), and 235–236 (GR).

It belongs to the Dus family. DusC subfamily. FMN serves as cofactor.

The enzyme catalyses 5,6-dihydrouridine(16) in tRNA + NADP(+) = uridine(16) in tRNA + NADPH + H(+). The catalysed reaction is 5,6-dihydrouridine(16) in tRNA + NAD(+) = uridine(16) in tRNA + NADH + H(+). Its function is as follows. Catalyzes the synthesis of 5,6-dihydrouridine (D), a modified base found in the D-loop of most tRNAs, via the reduction of the C5-C6 double bond in target uridines. Specifically modifies U16 in tRNAs. The polypeptide is tRNA-dihydrouridine(16) synthase (Neisseria meningitidis serogroup B (strain ATCC BAA-335 / MC58)).